Here is a 133-residue protein sequence, read N- to C-terminus: MEISLLQAFALGIIAFIAGLDMFNGLTHMHRPVVLGPLVGLVLGDLHTGILTGGTLELVWMGLAPLAGAQPPNVIIGTIVGTAFAITTGVKPDVAVGVAVPFAVAVQMGITFLFSVMSGVMSRCDLATNPRRI.

Topologically, residues 1-2 (ME) are cytoplasmic. The region spanning 1–133 (MEISLLQAFA…CDLATNPRRI (133 aa)) is the PTS EIIC type-4 domain. A helical membrane pass occupies residues 3-23 (ISLLQAFALGIIAFIAGLDMF). Residues 24 to 32 (NGLTHMHRP) lie on the Periplasmic side of the membrane. A helical transmembrane segment spans residues 33 to 53 (VVLGPLVGLVLGDLHTGILTG). Over 54 to 65 (GTLELVWMGLAP) the chain is Cytoplasmic. Residues 66–86 (LAGAQPPNVIIGTIVGTAFAI) form a helical membrane-spanning segment. The Periplasmic segment spans residues 87 to 93 (TTGVKPD). The helical transmembrane segment at 94 to 114 (VAVGVAVPFAVAVQMGITFLF) threads the bilayer. The Cytoplasmic segment spans residues 115–133 (SVMSGVMSRCDLATNPRRI).

The protein localises to the cell inner membrane. Its function is as follows. The phosphoenolpyruvate-dependent sugar phosphotransferase system (PTS), a major carbohydrate active -transport system, catalyzes the phosphorylation of incoming sugar substrates concomitant with their translocation across the cell membrane. This system is involved in N-acetylgalactosamine transport. The polypeptide is Putative N-acetylgalactosamine permease IIC component 2 (agaW) (Escherichia coli (strain K12)).